We begin with the raw amino-acid sequence, 152 residues long: Small ribosomal subunit protein uS8m (152 aa).

Belongs to the universal ribosomal protein uS8 family. As to quaternary structure, component of the mitochondrial small ribosomal subunit (mt-SSU). Mature yeast 74S mitochondrial ribosomes consist of a small (37S) and a large (54S) subunit. The 37S small subunit contains a 15S ribosomal RNA (15S mt-rRNA) and at least 32 different proteins. The 54S large subunit contains a 21S rRNA (21S mt-rRNA) and at least 45 different proteins.

The protein localises to the mitochondrion. In terms of biological role, component of the mitochondrial ribosome (mitoribosome), a dedicated translation machinery responsible for the synthesis of mitochondrial genome-encoded proteins, including at least some of the essential transmembrane subunits of the mitochondrial respiratory chain. The mitoribosomes are attached to the mitochondrial inner membrane and translation products are cotranslationally integrated into the membrane. The protein is Small ribosomal subunit protein uS8m (mrps8) of Schizosaccharomyces pombe (strain 972 / ATCC 24843) (Fission yeast).